The primary structure comprises 364 residues: MQERHTEQDYRALLIADTPIIDVRAPIEFEQGAMPAAINLPLMNNDERAAVGTCYKQQGSDAALALGHKLVAGEIRQQRMDAWRAACLQNPQGILCCARGGQRSHIVQRWLHEAGIDYPLVDGGYKALRQTAIQATIELSQKPIVLIGGCTGSGKTLLVQQQPNGVDLEGLARHRGSAFGRTLQPQLSQASFENLLAAEMLKTDARQELRLWVLEDESRMIGSNHLPECLRERMTQAAIAVVEDPFEIRLERLNEEYFLRMHHDFTHAYGDEQGWQEYCEYLHHGLSAIKRRLGLQRYNELAAQLDTALTTQLTTGSTDGHLAWLVPLLEEYYDPMYRYQLEKKAEKVVFRGEWAEVAEWVKAQ.

A Rhodanese domain is found at 14–137; the sequence is LIADTPIIDV…LRQTAIQATI (124 aa). The active-site S-selanylcysteine intermediate is the cysteine 97.

This sequence belongs to the SelU family. In terms of assembly, monomer.

The catalysed reaction is 5-methylaminomethyl-2-thiouridine(34) in tRNA + selenophosphate + (2E)-geranyl diphosphate + H2O + H(+) = 5-methylaminomethyl-2-selenouridine(34) in tRNA + (2E)-thiogeraniol + phosphate + diphosphate. It carries out the reaction 5-methylaminomethyl-2-thiouridine(34) in tRNA + (2E)-geranyl diphosphate = 5-methylaminomethyl-S-(2E)-geranyl-thiouridine(34) in tRNA + diphosphate. It catalyses the reaction 5-methylaminomethyl-S-(2E)-geranyl-thiouridine(34) in tRNA + selenophosphate + H(+) = 5-methylaminomethyl-2-(Se-phospho)selenouridine(34) in tRNA + (2E)-thiogeraniol. The enzyme catalyses 5-methylaminomethyl-2-(Se-phospho)selenouridine(34) in tRNA + H2O = 5-methylaminomethyl-2-selenouridine(34) in tRNA + phosphate. In terms of biological role, involved in the post-transcriptional modification of the uridine at the wobble position (U34) of tRNA(Lys), tRNA(Glu) and tRNA(Gln). Catalyzes the conversion of 2-thiouridine (S2U-RNA) to 2-selenouridine (Se2U-RNA). Acts in a two-step process involving geranylation of 2-thiouridine (S2U) to S-geranyl-2-thiouridine (geS2U) and subsequent selenation of the latter derivative to 2-selenouridine (Se2U) in the tRNA chain. The chain is tRNA 2-selenouridine synthase from Escherichia coli O17:K52:H18 (strain UMN026 / ExPEC).